We begin with the raw amino-acid sequence, 231 residues long: Lipoprotein-releasing system ATP-binding protein LolD (231 aa).

The 226-residue stretch at 6 to 231 folds into the ABC transporter domain; that stretch reads LQVQAVSKSY…YLQAVAEHAQ (226 aa). Position 42-49 (42-49) interacts with ATP; the sequence is GTSGSGKS.

This sequence belongs to the ABC transporter superfamily. Lipoprotein translocase (TC 3.A.1.125) family. The complex is composed of two ATP-binding proteins (LolD) and two transmembrane proteins (LolC and LolE).

The protein resides in the cell inner membrane. In terms of biological role, part of the ABC transporter complex LolCDE involved in the translocation of mature outer membrane-directed lipoproteins, from the inner membrane to the periplasmic chaperone, LolA. Responsible for the formation of the LolA-lipoprotein complex in an ATP-dependent manner. In Shewanella sp. (strain MR-7), this protein is Lipoprotein-releasing system ATP-binding protein LolD.